The following is a 411-amino-acid chain: Phospholipase ABHD3 (411 aa).

A helical; Signal-anchor for type II membrane protein membrane pass occupies residues 25–45 (VGFFGSGVGFSLILGFSVAYA). The 108-residue stretch at 140-247 (PTVLLLPGLT…PLKAAATFSV (108 aa)) folds into the AB hydrolase-1 domain. Active-site charge relay system residues include Ser-220, Asp-346, and His-375.

The protein belongs to the AB hydrolase superfamily. AB hydrolase 4 family.

The protein resides in the membrane. It catalyses the reaction a 1,2-diacyl-sn-glycero-3-phosphocholine + H2O = a 1-acyl-sn-glycero-3-phosphocholine + a fatty acid + H(+). The enzyme catalyses a 1,2-diacyl-sn-glycero-3-phosphocholine + H2O = a 2-acyl-sn-glycero-3-phosphocholine + a fatty acid + H(+). It carries out the reaction 1-tetradecanoyl-2-(9Z,12Z-octadecadienoyl)-sn-glycero-3-phosphocholine + H2O = 2-(9Z,12Z-octadecadienoyl)-sn-glycero-3-phosphocholine + tetradecanoate + H(+). The catalysed reaction is 1-tetradecanoyl-2-(9Z,12Z-octadecadienoyl)-sn-glycero-3-phosphocholine + H2O = 1-tetradecanoyl-sn-glycero-3-phosphocholine + (9Z,12Z)-octadecadienoate + H(+). It catalyses the reaction 1-tetradecanoyl-2-(5Z,8Z,11Z,14Z-eicosatetraenoyl)-sn-glycero-3-phosphocholine + H2O = 2-(5Z,8Z,11Z,14Z)-eicosatetraenoyl-sn-glycero-3-phosphocholine + tetradecanoate + H(+). The enzyme catalyses 1-tetradecanoyl-2-(4Z,7Z,10Z,13Z,16Z,19Z-docosahexaenoyl)-sn-glycero-3-phosphocholine + H2O = 2-(4Z,7Z,10Z,13Z,16Z,19Z-docosahexaenoyl)-sn-glycero-3-phosphocholine + tetradecanoate + H(+). It carries out the reaction 1,2-ditetradecanoyl-sn-glycero-3-phosphocholine + H2O = 2-tetradecanoyl-sn-glycero-3-phosphocholine + tetradecanoate + H(+). The catalysed reaction is 1-octadecanoyl-2-acetyl-sn-glycero-3-phosphocholine + H2O = 1-octadecanoyl-sn-glycero-3-phosphocholine + acetate + H(+). It catalyses the reaction 1,2-ditetradecanoyl-sn-glycero-3-phosphocholine + H2O = 1-tetradecanoyl-sn-glycero-3-phosphocholine + tetradecanoate + H(+). The enzyme catalyses 1-octadecanoyl-2-pentanoyl-sn-glycero-3-phosphocholine + H2O = pentanoate + 1-octadecanoyl-sn-glycero-3-phosphocholine + H(+). It carries out the reaction 1-octadecanoyl-2-hexanoyl-sn-glycero-3-phosphocholine + H2O = hexanoate + 1-octadecanoyl-sn-glycero-3-phosphocholine + H(+). The catalysed reaction is 1-octadecanoyl-2-octanoyl-sn-glycero-3-phosphocholine + H2O = 1-octadecanoyl-sn-glycero-3-phosphocholine + octanoate + H(+). It catalyses the reaction 1-octadecanoyl-2-nonanoyl-sn-glycero-3-phosphocholine + H2O = nonanoate + 1-octadecanoyl-sn-glycero-3-phosphocholine + H(+). The enzyme catalyses 1-O-hexadecyl-2-nonadioyl-sn-glycero-3-phosphocholine + H2O = nonanedioate + 1-O-hexadecyl-sn-glycero-3-phosphocholine + H(+). It carries out the reaction 1-hexadecanoyl-2-nonadioyl-sn-glycero-3-phosphocholine + H2O = nonanedioate + 1-hexadecanoyl-sn-glycero-3-phosphocholine + H(+). The catalysed reaction is 1-hexadecanoyl-2-(9-oxononanoyl)-sn-glycero-3-phosphocholine + H2O = 9-oxononanoate + 1-hexadecanoyl-sn-glycero-3-phosphocholine + H(+). It catalyses the reaction 1-hexadecanoyl-2-(5-oxopentanoyl)-sn-glycero-3-phosphocholine + H2O = 5-oxopentanoate + 1-hexadecanoyl-sn-glycero-3-phosphocholine + H(+). The enzyme catalyses 1-hexadecanoyl-2-glutaroyl-sn-glycero-3-phosphocholine + H2O = glutarate + 1-hexadecanoyl-sn-glycero-3-phosphocholine + H(+). It carries out the reaction 1-O-hexadecyl-2-acetyl-sn-glycero-3-phosphocholine + H2O = 1-O-hexadecyl-sn-glycero-3-phosphocholine + acetate + H(+). In terms of biological role, phospholipase that may play a role in phospholipids remodeling. May selectively cleave myristate (C14)-containing phosphatidylcholines through its predominant phospholipase 1 activity, cleaving preferentially acyl groups in sn1 position. In parallel, may have a minor phospholipase 2 activity acting on acyl groups in position sn2. In addition to (C14)-containing phosphatidylcholines, may also act on other medium-chain-containing and oxidatively truncated phospholipids. This is Phospholipase ABHD3 from Bos taurus (Bovine).